We begin with the raw amino-acid sequence, 26 residues long: Conotoxin Eb6.17 (26 aa).

2 disulfide bridges follow: Cys-7–Cys-18 and Cys-13–Cys-25.

The protein belongs to the conotoxin O1 superfamily. As to expression, expressed by the venom duct.

Its subcellular location is the secreted. This chain is Conotoxin Eb6.17 (E1), found in Conus ebraeus (Hebrew cone).